Consider the following 436-residue polypeptide: 3-ketoacyl-CoA thiolase (436 aa).

The active-site Acyl-thioester intermediate is C99. Catalysis depends on proton acceptor residues H392 and C422.

Belongs to the thiolase-like superfamily. Thiolase family. Heterotetramer of two alpha chains (FadJ) and two beta chains (FadI).

It is found in the cytoplasm. It carries out the reaction an acyl-CoA + acetyl-CoA = a 3-oxoacyl-CoA + CoA. The protein operates within lipid metabolism; fatty acid beta-oxidation. Catalyzes the final step of fatty acid oxidation in which acetyl-CoA is released and the CoA ester of a fatty acid two carbons shorter is formed. This chain is 3-ketoacyl-CoA thiolase, found in Escherichia coli O127:H6 (strain E2348/69 / EPEC).